A 355-amino-acid polypeptide reads, in one-letter code: cGAMP-activated phospholipase (355 aa).

One can recognise a PNPLA domain in the interval 17 to 214; that stretch reads LSLNGGGARG…VANNPSFIGL (198 aa). The short motif at 21 to 26 is the GXGXXG element; it reads GGGARG. Residues 60 to 64 carry the GXSXG motif; the sequence is GTSIG. Serine 62 (nucleophile) is an active-site residue. Aspartate 201 functions as the Proton acceptor in the catalytic mechanism. The DGA/G signature appears at 201–203; sequence DGG.

It belongs to the patatin family.

It carries out the reaction a 1,2-diacyl-sn-glycero-3-phosphocholine + H2O = a 2-acyl-sn-glycero-3-phosphocholine + a fatty acid + H(+). The catalysed reaction is 1,2-di-(9Z-octadecenoyl)-sn-glycero-3-phosphoethanolamine + 2 H2O = sn-glycero-3-phosphoethanolamine + 2 (9Z)-octadecenoate + 2 H(+). With respect to regulation, phospholipase activity is specifically activated upon 3',3'-cGAMP (cGAMP) binding. Is not activated by the other cyclic dinucleotides 3',3'-cUAMP, 3',3'-c-diAMP and 3',3'-c-diGMP. Therefore, is specifically activated by only the nucleotide synthesized from its adjacently encoded nucleotidyltransferase (DncV). The cGAMP-activation of lipase is inhibited by T4 phage protein Acb2 (Vs.4). Functionally, effector phospholipase of a CBASS antiviral system. CBASS (cyclic oligonucleotide-based antiphage signaling system) provides immunity against bacteriophages. The CD-NTase protein (DncV) synthesizes cyclic nucleotides in response to infection; these serve as specific second messenger signals. The signals activate a diverse range of effectors, leading to bacterial cell death and thus abortive phage infection. A type II-A(GA) CBASS system. In terms of biological role, phospholipase that is activated upon binding to the cyclic dinucleotide (CDN) second messenger 3',3'-cyclic GMP-AMP (3',3'-cGAMP). Then degrades phosphatidylethanolamine (PE) and phosphatidylglycerol (PG), the major phospholipids in the cell membrane of V.cholerae, releasing 16:1 and 18:1 free fatty acids. Upon expression in E.coli with cognate DncV, the cell inner membrane shrinks and separates from the cell wall. Its function is as follows. Protects E.coli against phage infection. When the CBASS operon (capV-dncV-cap2-cap3) is introduced in E.coli MG1655 there is about 100-fold protection against phages P1 and T2. When the operon is introduced in E.coli MG1655 there is a more than 10(3) decrease in the efficiency of T2 plaque formation. Protects 100-fold against phage T5, offers no protection against T7. When the operon is introduced in E.coli MG1655 it protects against phages T2, T4, T5 and T6. Another paper shows the operon confers protection against phages P1, T2, T5 and T6 but not T4 or lambda. The sequence is that of cGAMP-activated phospholipase from Vibrio cholerae serotype O1 (strain ATCC 39315 / El Tor Inaba N16961).